The following is a 307-amino-acid chain: Inner spore coat protein H-like protein (307 aa).

This sequence belongs to the CotH family.

The protein localises to the spore coat. Involved in the assembly of several proteins in the inner and outer layer of the spore coat. This chain is Inner spore coat protein H-like protein (yisJ), found in Bacillus subtilis (strain 168).